The chain runs to 367 residues: Protein NDRG4-B (367 aa).

The span at 1–12 (MSELRFPEEKPL) shows a compositional bias: basic and acidic residues. Disordered stretches follow at residues 1-21 (MSEL…TEME) and 333-367 (LTSA…EVSC). Residues 347–367 (CTQSESSDGIGQINHTMEVSC) show a composition bias toward polar residues.

Belongs to the NDRG family.

It is found in the cytoplasm. The protein localises to the cytosol. Its function is as follows. Contributes to the maintenance of intracerebral BDNF levels within the normal range. May enhance growth factor-induced ERK1 and ERK2 phosphorylation. May attenuate growth factor-promoted ELK1 phosphorylation in a microtubule-dependent manner. This Xenopus laevis (African clawed frog) protein is Protein NDRG4-B (ndrg4-b).